The following is a 493-amino-acid chain: Glutamyl-tRNA(Gln) amidotransferase subunit A (493 aa).

Catalysis depends on charge relay system residues lysine 79 and serine 159. Serine 183 acts as the Acyl-ester intermediate in catalysis.

Belongs to the amidase family. GatA subfamily. In terms of assembly, heterotrimer of A, B and C subunits.

The enzyme catalyses L-glutamyl-tRNA(Gln) + L-glutamine + ATP + H2O = L-glutaminyl-tRNA(Gln) + L-glutamate + ADP + phosphate + H(+). In terms of biological role, allows the formation of correctly charged Gln-tRNA(Gln) through the transamidation of misacylated Glu-tRNA(Gln) in organisms which lack glutaminyl-tRNA synthetase. The reaction takes place in the presence of glutamine and ATP through an activated gamma-phospho-Glu-tRNA(Gln). This Brucella suis biovar 1 (strain 1330) protein is Glutamyl-tRNA(Gln) amidotransferase subunit A.